Here is a 342-residue protein sequence, read N- to C-terminus: Phosphate acyltransferase (342 aa).

This sequence belongs to the PlsX family. As to quaternary structure, homodimer. Probably interacts with PlsY.

It localises to the cytoplasm. The catalysed reaction is a fatty acyl-[ACP] + phosphate = an acyl phosphate + holo-[ACP]. The protein operates within lipid metabolism; phospholipid metabolism. Catalyzes the reversible formation of acyl-phosphate (acyl-PO(4)) from acyl-[acyl-carrier-protein] (acyl-ACP). This enzyme utilizes acyl-ACP as fatty acyl donor, but not acyl-CoA. The polypeptide is Phosphate acyltransferase (Shewanella sp. (strain MR-4)).